The sequence spans 223 residues: MSRVSNSDNYSLAGQQHTVLGSGRTSSLLWTSNPGSHFRSETRGNGRENGQDRVKRPMNAFMVWSRDHRRKVALENPQLQNSEISKRLGCQWKMLTEAEKLPFFEEAQRLRAMHQEKYPDYKYRPRRKAKMPQKSDKPLPQTPLLHCAGRRTYTSTSGCPFLIHGRLFLRATQSQTGGAVKPFAAGATAISALQQELSQQHRTLRCHSGNVGYADIRRRSLSL.

Residues 23 to 35 (GRTSSLLWTSNPG) are compositionally biased toward polar residues. The tract at residues 23-55 (GRTSSLLWTSNPGSHFRSETRGNGRENGQDRVK) is disordered. Basic and acidic residues predominate over residues 38 to 55 (FRSETRGNGRENGQDRVK). The segment at residues 54–122 (VKRPMNAFMV…MHQEKYPDYK (69 aa)) is a DNA-binding region (HMG box).

This sequence belongs to the SRY family. Interacts with CALM, EP300, HDAC3, KPNB1, ZNF208 isoform KRAB-O, PARP1, SLC9A3R2 and WT1. The interaction with EP300 modulates its DNA-binding activity. The interaction with KPNB1 is sensitive to dissociation by Ran in the GTP-bound form. Interaction with PARP1 impaired its DNA-binding activity. Acetylation of Lys-130 contributes to its nuclear localization and enhances its interaction with KPNB1. Deacetylated by HDAC3.

The protein localises to the nucleus speckle. Its subcellular location is the cytoplasm. It localises to the nucleus. Its function is as follows. Transcriptional regulator that controls a genetic switch in male development. It is necessary and sufficient for initiating male sex determination by directing the development of supporting cell precursors (pre-Sertoli cells) as Sertoli rather than granulosa cells. Involved in different aspects of gene regulation including promoter activation or repression. Binds to the DNA consensus sequence 5'-[AT]AACAA[AT]-3'. SRY HMG box recognizes DNA by partial intercalation in the minor groove and promotes DNA bending. Also involved in pre-mRNA splicing. In male adult brain involved in the maintenance of motor functions of dopaminergic neurons. The polypeptide is Sex-determining region Y protein (SRY) (Equus caballus (Horse)).